The following is a 569-amino-acid chain: 63 kDa chaperonin, mitochondrial (569 aa).

A mitochondrion-targeting transit peptide spans 1-29 (MFKMYRSPHITRNSFKYLKATNINSCRFY).

This sequence belongs to the chaperonin (HSP60) family. Forms a single seven-member ring complex, in tight association with the p60 protein. As to expression, testis.

It localises to the mitochondrion. Implicated in mitochondrial protein import and macromolecular assembly. May facilitate the correct folding of imported proteins. May also prevent misfolding and promote the refolding and proper assembly of unfolded polypeptides generated under stress conditions in the mitochondrial matrix. This chain is 63 kDa chaperonin, mitochondrial, found in Heliothis virescens (Tobacco budworm moth).